The sequence spans 629 residues: tRNA uridine 5-carboxymethylaminomethyl modification enzyme MnmG (629 aa).

FAD is bound by residues 13 to 18, V125, and S180; that span reads GGGHAG. An NAD(+)-binding site is contributed by 273-287; that stretch reads GPRYCPSIEDKVMRF. Residue Q370 coordinates FAD.

It belongs to the MnmG family. Homodimer. Heterotetramer of two MnmE and two MnmG subunits. FAD is required as a cofactor.

The protein localises to the cytoplasm. NAD-binding protein involved in the addition of a carboxymethylaminomethyl (cmnm) group at the wobble position (U34) of certain tRNAs, forming tRNA-cmnm(5)s(2)U34. The protein is tRNA uridine 5-carboxymethylaminomethyl modification enzyme MnmG of Aliivibrio fischeri (strain ATCC 700601 / ES114) (Vibrio fischeri).